The following is a 456-amino-acid chain: Chromosomal replication initiator protein DnaA 1 (456 aa).

A domain I, interacts with DnaA modulators region spans residues 1–68 (MRAWEEFLLL…KASLINNNGK (68 aa)). Residues 68-101 (KPIRVRVTSLDKSTPFKETQIQQEKTAYFTMKYG) are domain II. The tract at residues 102–320 (DIDPNMSFAN…HALTTLAKRV (219 aa)) is domain III, AAA+ region. ATP-binding residues include serine 150, glycine 152, lysine 153, and threonine 154. Residues 321 to 456 (AYKKLSHQML…AYQSLDFIED (136 aa)) form a domain IV, binds dsDNA region.

This sequence belongs to the DnaA family. As to quaternary structure, oligomerizes as a right-handed, spiral filament on DNA at oriC.

It is found in the cytoplasm. Its function is as follows. Plays an essential role in the initiation and regulation of chromosomal replication. ATP-DnaA binds to the origin of replication (oriC) to initiate formation of the DNA replication initiation complex once per cell cycle. Binds the DnaA box (a 9 base pair repeat at the origin) and separates the double-stranded (ds)DNA. Forms a right-handed helical filament on oriC DNA; dsDNA binds to the exterior of the filament while single-stranded (ss)DNA is stabiized in the filament's interior. The ATP-DnaA-oriC complex binds and stabilizes one strand of the AT-rich DNA unwinding element (DUE), permitting loading of DNA polymerase. After initiation quickly degrades to an ADP-DnaA complex that is not apt for DNA replication. Binds acidic phospholipids. The chain is Chromosomal replication initiator protein DnaA 1 from Chlamydia trachomatis serovar D (strain ATCC VR-885 / DSM 19411 / UW-3/Cx).